A 123-amino-acid polypeptide reads, in one-letter code: Small ribosomal subunit protein uS12 (123 aa).

At D89 the chain carries 3-methylthioaspartic acid. Residues 101-123 (TLDTQGVKDRRQRRSKYGAKRPK) form a disordered region. The segment covering 110–123 (RRQRRSKYGAKRPK) has biased composition (basic residues).

Belongs to the universal ribosomal protein uS12 family. As to quaternary structure, part of the 30S ribosomal subunit. Contacts proteins S8 and S17. May interact with IF1 in the 30S initiation complex.

In terms of biological role, with S4 and S5 plays an important role in translational accuracy. Interacts with and stabilizes bases of the 16S rRNA that are involved in tRNA selection in the A site and with the mRNA backbone. Located at the interface of the 30S and 50S subunits, it traverses the body of the 30S subunit contacting proteins on the other side and probably holding the rRNA structure together. The combined cluster of proteins S8, S12 and S17 appears to hold together the shoulder and platform of the 30S subunit. The polypeptide is Small ribosomal subunit protein uS12 (Paramagnetospirillum magneticum (strain ATCC 700264 / AMB-1) (Magnetospirillum magneticum)).